Consider the following 2282-residue polypeptide: MFFATGRASAFSHPCGRTAVSLREERRIKKRKRQDGFYMLLDPKNAKPRQKSVLLSPLSQSAGCLTLSFHYTLWGQSPGAALSVLASVLGSIRKHTLFSGQPSPNWQPVSVNYSGPGQIQFTVVGVFGDVPEPAVAVDAISIAPCGESFPQCVFEDAAHPFCDWLQASEDGGRWAWTDKDMLAQERSLMRESPHTGHHYIYLEADKFSRPGQSVRLVSRPFCAPGDVCVEFSYHMYGLGEGTTLQFLLGSPAGSTPVSLWNRVGSQSPDWLNASVTIPSGHQQPMQLVFEAIRGSNTAFVVAMSFILINHGTCHVPVPPVIPIKTLVIPTEQPTVPAEGTTEPPEGTIELPEGTTKLPEETTELPEEITEPPKETTIPTEPPTVPTEPPTVPTEPPTVPTEKPTVLTEKPTVPTEETSIPTEPPTVPTEKPTVATEPPTVPTEEPTVATEKPTVPTEETTPPTTARSTLTSLEPTTHTPSTSLTSTTLSTTTTPSPTTVSCPANAHYESCACPASCKHPKASCKPPCQPGCVCDPGLVFSNNSCIKASSCPCLYNNNNYEPEAEWFSPNCTELCHCWPGGRIECQISQCKTHTKCQLKNGQYECQPYGTATCFVYGDPHYVTFDGRHFGFMGKCTYIVAQPCSKSTDSFFRVTAKNEERGQEGMSCLSRVDVTLSETVVTLLKGRRTLVGGQRVTLPAMPAKGVFLGPSGRFVELQTDFGLRVRWDGDQQLLVTVPSAYFQKLCGLCGNYDGHSSNDNLKADGQPAQSEEELGNSWQWAQDEDKECQKNQANPPSCDTALQTKMSGPQFCGQLVDSRGVFKTCLLHLKASSFFDNCVFDTCNFQGLQLMLCAHMSAVTAACQDAGYAVKPWREPQFCPLACPPNSRYSLCTSPCPKTCHTGYVGMPCPEQCLEGCECNPGFILSGLECVPSAQCGCLDPSRGYFKVGEQWFKSDCKQLCICEGSNQIRCQPWKCGPHEVCSQQSGIYGCHSQGSATCSASGDPHYLTFDGALHHFMGTCNYVLTQPCRHRPQENSFVVSATNEIRDGNLEVSLRPSCPRCRSSALKISLVKGHKVVLNGRRVALPVWPSRGQVTVRPSGNFMLLYTNFGLRVRYDGNHLVEVTVPSSYAGQLCGLCGNYNNNSLDDILGPYKRPVGNSVQLGAAWKLEEGSETGCFLQGGKPSSCHEDMGDTWNKNCEVLVNPLGPFSQCHKVVPPEVSFTSCVHGQCGTKGDSLTLCRSLQAYASLCSLAGQALAWRNSTFCPLKCPPNSSYSPCGSPCPGTCLSLNHPKDCPITLPCVEGCECQNGYILSGTSCVPLNQCGCTDFEGSYHLVRESWYTDNTCSRLCTCSLHNNITCRQTACKPGQQCWAVDGLLRCRDSGMGVCQVTGDSRYLSFDGSSHPLQGACTYVLAKVCHPNMDLPFFKVSASNEKSSAGGTNAVSLHQVYIEFSGSLVTLQKGNLVLINGTRVALPATSQIRGLNISSSRTHTIVSFWIGAQIKFDGNHVLKITIPAAYYEKVCGICGNYNGEPEDELMMPSDELAASDLEFVKSWKDNNIDPNCQKSQEGKGKPQEEQGPSGSSKKASCSPADLQKVQEQCQAALQTPAWAECASRVDLRPFLLDCMNSLCEFRGSLQPLCKALQALGAACRSKGLQPPIWRNSSFCPLACPAYSTYTNCLPSCSPSCFDPDGRCEGARAPSSCAEGCTCQPGYVLSKNKCVAKDQCSCRDAQGGSIPSGKSWVSSGCSQKCACTEGSIQCRAFHCPSRSHCKLNSNGNSNCVSEKSDQCSIFGGPHYRTFDRFSFGFRGRMTYVLIKTVDELPDGVERLLVQARNKMYPPWNKVFLQEIITTVYGYKVQLQRDLVLVVNNQKMAVPYKPEDRLRVSMQGQRLFLITDFEMVVSFDGRNAAVITLPSMYQGLVRGLCGNYDSDRRNEMMLPNGAITTNVDVFGNSWEVKTEDSVLRFRRALQVEADGKEKETGSYRSECSQEQLALVNSTQACRVLVDPQGPFAACHQTVAPEPFQEHCVSDLCASRDPKEHEELRCQVLSGYSITCQEAGIALAGWRDHTHCAMVCPANTVYQSCMTPCPESCANLAAPRDCEGPCVEGCASLPGYAFSGAQSLPLANCGCTSNGIYYQLGHSFVTADCSQRCTCASSGVLLCEPFSCRPGESCTLGNLTRGCFRESPCLRNPCQNDGRCREQGTSFTCECEPGYGGHLCTEPRDVLLPPKPDTSNLVAILLGMLVSLVVTVPVLARKCVSRKRRRWREKTQSEPRSAPGRR.

MAM domains are found at residues 1 to 147 and 150 to 315; these read MFFA…PCGE and PQCV…TCHV. Residues 1–2235 lie on the Extracellular side of the membrane; the sequence is MFFATGRASA…VLLPPKPDTS (2235 aa). N-linked (GlcNAc...) asparagine glycans are attached at residues N112 and N272. Residues 315 to 498 are 26 X approximate heptapeptide repeats (mucin-like domain); sequence VPVPPVIPIK…STTTTPSPTT (184 aa). A compositionally biased stretch (low complexity) spans 333 to 356; it reads PTVPAEGTTEPPEGTIELPEGTTK. The tract at residues 333-495 is disordered; that stretch reads PTVPAEGTTE…TTLSTTTTPS (163 aa). The segment covering 360–369 has biased composition (acidic residues); it reads ETTELPEEIT. The segment covering 379 to 398 has biased composition (pro residues); it reads TEPPTVPTEPPTVPTEPPTV. 2 stretches are compositionally biased toward low complexity: residues 399-420 and 427-495; these read PTEK…TSIP and PTEK…TTPS. One can recognise a TIL 1 domain in the interval 501–550; it reads CPANAHYESCACPASCKHPKASCKPPCQPGCVCDPGLVFSNNSCIKASSC. Residues N541 and N569 are each glycosylated (N-linked (GlcNAc...) asparagine). Residues 551–605 form the VWFC 1 domain; that stretch reads PCLYNNNNYEPEAEWFSPNCTELCHCWPGGRIECQISQCKTHTKCQLKNGQYECQ. The region spanning 610-787 is the VWFD 1 domain; that stretch reads ATCFVYGDPH…WAQDEDKECQ (178 aa). 2 disulfide bridges follow: C612/C747 and C634/C786. The region spanning 881–934 is the TIL 2 domain; that stretch reads CPPNSRYSLCTSPCPKTCHTGYVGMPCPEQCLEGCECNPGFILSGLECVPSAQC. The VWFC 2 domain maps to 935 to 990; the sequence is GCLDPSRGYFKVGEQWFKSDCKQLCICEGSNQIRCQPWKCGPHEVCSQQSGIYGCH. Residues 995 to 1176 form the VWFD 2 domain; sequence ATCSASGDPH…LEEGSETGCF (182 aa). 2 disulfide bridges follow: C997/C1136 and C1019/C1175. N-linked (GlcNAc...) asparagine glycosylation is found at N1141, N1259, N1270, N1355, N1467, and N1483. The TIL 3 domain occupies 1267–1322; sequence CPPNSSYSPCGSPCPGTCLSLNHPKDCPITLPCVEGCECQNGYILSGTSCVPLNQC. Residues 1323–1379 enclose the VWFC 3 domain; it reads GCTDFEGSYHLVRESWYTDNTCSRLCTCSLHNNITCRQTACKPGQQCWAVDGLLRCR. Residues 1384–1564 enclose the VWFD 3 domain; that stretch reads GVCQVTGDSR…KDNNIDPNCQ (181 aa). Cystine bridges form between C1386/C1525 and C1408/C1563. The tract at residues 1561–1588 is disordered; that stretch reads PNCQKSQEGKGKPQEEQGPSGSSKKASC. Positions 1577–1586 are enriched in polar residues; the sequence is QGPSGSSKKA. N1662 carries an N-linked (GlcNAc...) asparagine glycan. The region spanning 1670–1726 is the TIL 4 domain; that stretch reads CPAYSTYTNCLPSCSPSCFDPDGRCEGARAPSSCAEGCTCQPGYVLSKNKCVAKDQC. The VWFC 4 domain occupies 1727–1782; that stretch reads SCRDAQGGSIPSGKSWVSSGCSQKCACTEGSIQCRAFHCPSRSHCKLNSNGNSNCV. Positions 1787-1963 constitute a VWFD 4 domain; the sequence is DQCSIFGGPH…SWEVKTEDSV (177 aa). A disulfide bond links C1789 and C1926. An N-linked (GlcNAc...) asparagine glycan is attached at N1997. Residues 2076-2129 enclose the TIL 5 domain; it reads CPANTVYQSCMTPCPESCANLAAPRDCEGPCVEGCASLPGYAFSGAQSLPLANC. Residues 2130–2184 form the VWFC 5 domain; that stretch reads GCTSNGIYYQLGHSFVTADCSQRCTCASSGVLLCEPFSCRPGESCTLGNLTRGCF. N2178 carries an N-linked (GlcNAc...) asparagine glycan. The EGF-like domain occupies 2185–2221; it reads RESPCLRNPCQNDGRCREQGTSFTCECEPGYGGHLCT. 3 disulfides stabilise this stretch: C2189-C2200, C2194-C2209, and C2211-C2220. The helical transmembrane segment at 2236 to 2256 threads the bilayer; sequence NLVAILLGMLVSLVVTVPVLA. At 2257–2282 the chain is on the cytoplasmic side; sequence RKCVSRKRRRWREKTQSEPRSAPGRR.

In terms of assembly, probably forms covalent oligomers.

The protein localises to the cell membrane. In terms of biological role, binds in a species-specific manner to the zona pellucida of the egg. May be involved in gamete recognition and/or signaling. The polypeptide is Zonadhesin (ZAN) (Oryctolagus cuniculus (Rabbit)).